A 149-amino-acid chain; its full sequence is D-aminoacyl-tRNA deacylase (149 aa).

The short motif at 137–138 (GP) is the Gly-cisPro motif, important for rejection of L-amino acids element.

Belongs to the DTD family. Homodimer.

Its subcellular location is the cytoplasm. The catalysed reaction is glycyl-tRNA(Ala) + H2O = tRNA(Ala) + glycine + H(+). The enzyme catalyses a D-aminoacyl-tRNA + H2O = a tRNA + a D-alpha-amino acid + H(+). In terms of biological role, an aminoacyl-tRNA editing enzyme that deacylates mischarged D-aminoacyl-tRNAs. Also deacylates mischarged glycyl-tRNA(Ala), protecting cells against glycine mischarging by AlaRS. Acts via tRNA-based rather than protein-based catalysis; rejects L-amino acids rather than detecting D-amino acids in the active site. By recycling D-aminoacyl-tRNA to D-amino acids and free tRNA molecules, this enzyme counteracts the toxicity associated with the formation of D-aminoacyl-tRNA entities in vivo and helps enforce protein L-homochirality. In Halothermothrix orenii (strain H 168 / OCM 544 / DSM 9562), this protein is D-aminoacyl-tRNA deacylase.